The following is a 682-amino-acid chain: Methionine synthase reductase (682 aa).

The Flavodoxin-like domain occupies 4–147 (FLIAFGSQTG…EVEPWIEKFF (144 aa)). 93-124 (LLGLGDSNYSSYQTIPRKIDKQLTALGANRLF) provides a ligand contact to FMN. One can recognise an FAD-binding FR-type domain in the interval 271–516 (TKPFEVLVVS…GKEPARFRLP (246 aa)). Position 293 (K293) interacts with NADP(+). FAD is bound by residues 455-458 (RPYS) and 488-491 (GLAT). NADP(+) is bound by residues 607 to 609 (RVQ) and D643. FAD is bound at residue W681.

The cofactor is FAD. Requires FMN as cofactor.

It carries out the reaction 2 methylcob(III)alamin-[methionine synthase] + 2 S-adenosyl-L-homocysteine + NADP(+) + H(+) = 2 cob(II)alamin-[methionine synthase] + 2 S-adenosyl-L-methionine + NADPH. Its function is as follows. Involved in the reductive regeneration of cob(I)alamin cofactor required for the maintenance of methionine synthase in a functional state. The sequence is that of Methionine synthase reductase from Caenorhabditis elegans.